Consider the following 170-residue polypeptide: Ribosome maturation factor RimM (170 aa).

The region spanning 97 to 170 (KPDEYYWVDL…LVVVDWDPEF (74 aa)) is the PRC barrel domain.

Belongs to the RimM family. Binds ribosomal protein uS19.

The protein localises to the cytoplasm. In terms of biological role, an accessory protein needed during the final step in the assembly of 30S ribosomal subunit, possibly for assembly of the head region. Essential for efficient processing of 16S rRNA. May be needed both before and after RbfA during the maturation of 16S rRNA. It has affinity for free ribosomal 30S subunits but not for 70S ribosomes. This chain is Ribosome maturation factor RimM, found in Stenotrophomonas maltophilia (strain K279a).